An 867-amino-acid chain; its full sequence is Leucine--tRNA ligase (867 aa).

The 'HIGH' region signature appears at 42 to 52 (PYPSGKLHMGH). The short motif at 631–635 (KMSKS) is the 'KMSKS' region element. Residue Lys634 participates in ATP binding.

This sequence belongs to the class-I aminoacyl-tRNA synthetase family.

The protein localises to the cytoplasm. The enzyme catalyses tRNA(Leu) + L-leucine + ATP = L-leucyl-tRNA(Leu) + AMP + diphosphate. In Dichelobacter nodosus (strain VCS1703A), this protein is Leucine--tRNA ligase.